The primary structure comprises 200 residues: Recombination protein RecR (200 aa).

A C4-type zinc finger spans residues 57–72 (CSQCRDFTEEDTCNIC). The Toprim domain occupies 81–176 (GLLCVVEMPA…KVSRIAHGIP (96 aa)).

Belongs to the RecR family.

Its function is as follows. May play a role in DNA repair. It seems to be involved in an RecBC-independent recombinational process of DNA repair. It may act with RecF and RecO. The protein is Recombination protein RecR of Haemophilus influenzae (strain 86-028NP).